We begin with the raw amino-acid sequence, 327 residues long: Undecaprenyl-phosphate 4-deoxy-4-formamido-L-arabinose transferase (327 aa).

2 helical membrane-spanning segments follow: residues 233–253 (ILSL…LLLI) and 268–288 (VFTL…GMGL).

Belongs to the glycosyltransferase 2 family.

It is found in the cell inner membrane. It catalyses the reaction UDP-4-deoxy-4-formamido-beta-L-arabinose + di-trans,octa-cis-undecaprenyl phosphate = 4-deoxy-4-formamido-alpha-L-arabinopyranosyl di-trans,octa-cis-undecaprenyl phosphate + UDP. The protein operates within glycolipid biosynthesis; 4-amino-4-deoxy-alpha-L-arabinose undecaprenyl phosphate biosynthesis; 4-amino-4-deoxy-alpha-L-arabinose undecaprenyl phosphate from UDP-4-deoxy-4-formamido-beta-L-arabinose and undecaprenyl phosphate: step 1/2. It participates in bacterial outer membrane biogenesis; lipopolysaccharide biosynthesis. Catalyzes the transfer of 4-deoxy-4-formamido-L-arabinose from UDP to undecaprenyl phosphate. The modified arabinose is attached to lipid A and is required for resistance to polymyxin and cationic antimicrobial peptides. In Pectobacterium carotovorum subsp. carotovorum (strain PC1), this protein is Undecaprenyl-phosphate 4-deoxy-4-formamido-L-arabinose transferase.